Consider the following 317-residue polypeptide: 1-phosphofructokinase (317 aa).

Residues 223 to 228 (SMGAEG) and 254 to 255 (GD) each bind ATP. The active-site Proton acceptor is the D255.

It belongs to the carbohydrate kinase PfkB family.

It catalyses the reaction beta-D-fructose 1-phosphate + ATP = beta-D-fructose 1,6-bisphosphate + ADP + H(+). Its function is as follows. Catalyzes the ATP-dependent phosphorylation of fructose-l-phosphate to fructose-l,6-bisphosphate. This Vibrio cholerae serotype O1 (strain ATCC 39315 / El Tor Inaba N16961) protein is 1-phosphofructokinase.